A 278-amino-acid polypeptide reads, in one-letter code: 2-dehydro-3-deoxyphosphooctonate aldolase (278 aa).

The protein belongs to the KdsA family.

It localises to the cytoplasm. It carries out the reaction D-arabinose 5-phosphate + phosphoenolpyruvate + H2O = 3-deoxy-alpha-D-manno-2-octulosonate-8-phosphate + phosphate. The protein operates within carbohydrate biosynthesis; 3-deoxy-D-manno-octulosonate biosynthesis; 3-deoxy-D-manno-octulosonate from D-ribulose 5-phosphate: step 2/3. Its pathway is bacterial outer membrane biogenesis; lipopolysaccharide biosynthesis. The sequence is that of 2-dehydro-3-deoxyphosphooctonate aldolase from Koribacter versatilis (strain Ellin345).